The primary structure comprises 440 residues: Argininosuccinate lyase (440 aa).

This sequence belongs to the lyase 1 family. Argininosuccinate lyase subfamily.

It localises to the cytoplasm. It carries out the reaction 2-(N(omega)-L-arginino)succinate = fumarate + L-arginine. The protein operates within amino-acid biosynthesis; L-arginine biosynthesis; L-arginine from L-ornithine and carbamoyl phosphate: step 3/3. This is Argininosuccinate lyase from Clostridium botulinum (strain Okra / Type B1).